A 1365-amino-acid chain; its full sequence is DNA-directed RNA polymerase subunit beta' (1365 aa).

Zn(2+) contacts are provided by Cys-249, Cys-316, Cys-323, and Cys-326.

It belongs to the RNA polymerase beta' chain family. RpoC2 subfamily. In terms of assembly, in cyanobacteria the RNAP catalytic core is composed of 2 alpha, 1 beta, 1 beta', 1 gamma and 1 omega subunit. When a sigma factor is associated with the core the holoenzyme is formed, which can initiate transcription. The cofactor is Zn(2+).

The catalysed reaction is RNA(n) + a ribonucleoside 5'-triphosphate = RNA(n+1) + diphosphate. Functionally, DNA-dependent RNA polymerase catalyzes the transcription of DNA into RNA using the four ribonucleoside triphosphates as substrates. This chain is DNA-directed RNA polymerase subunit beta', found in Synechococcus sp. (strain CC9311).